The sequence spans 138 residues: Prefoldin subunit alpha (138 aa).

It belongs to the prefoldin subunit alpha family. As to quaternary structure, heterohexamer of two alpha and four beta subunits.

It localises to the cytoplasm. Its function is as follows. Molecular chaperone capable of stabilizing a range of proteins. Seems to fulfill an ATP-independent, HSP70-like function in archaeal de novo protein folding. The polypeptide is Prefoldin subunit alpha (Methanococcoides burtonii (strain DSM 6242 / NBRC 107633 / OCM 468 / ACE-M)).